A 340-amino-acid polypeptide reads, in one-letter code: Protein-arginine kinase (340 aa).

One can recognise a Phosphagen kinase C-terminal domain in the interval 21–242; it reads VVLSSRIRLA…EQIIMQERVA (222 aa). Residues 24 to 28, His79, Arg113, 164 to 168, and 195 to 200 each bind ATP; these read SSRIR, RASVM, and RGIYGE.

This sequence belongs to the ATP:guanido phosphotransferase family.

The enzyme catalyses L-arginyl-[protein] + ATP = N(omega)-phospho-L-arginyl-[protein] + ADP + H(+). Functionally, catalyzes the specific phosphorylation of arginine residues in proteins. This chain is Protein-arginine kinase, found in Listeria monocytogenes serotype 4b (strain F2365).